Here is a 538-residue protein sequence, read N- to C-terminus: Syncytin-2 (538 aa).

Positions 1-15 (MGLLLLVLILTPSLA) are cleaved as a signal peptide. Over 16-478 (AYRHPDFPLL…GWLNWEGTWK (463 aa)) the chain is Extracellular. Positions 43-46 (CWLC) match the CXXC motif. Disulfide bonds link C43–C46, C43–C439, and C431–C438. N133, N146, N177, N220, N241, N247, N312, and N332 each carry an N-linked (GlcNAc...) asparagine glycan. The segment at 354-374 (FIPLLAGLGILAGTGTGIAGI) is fusion peptide. The CKS-17 signature appears at 414–430 (LQNRRGLDMLTAAQGGI). The short motif at 431 to 439 (CLALDEKCC) is the CX6CC element. The N-linked (GlcNAc...) asparagine glycan is linked to N443. The chain crosses the membrane as a helical span at residues 479–499 (WFSWVLPLTGPLVSLLLLLLF). Topologically, residues 500–538 (GPCLLNLITQFVSSRLQAIKLQTNLSAGRHPRNIQESPF) are cytoplasmic.

The protein belongs to the gamma type-C retroviral envelope protein family. HERV class-I FRD env subfamily. The surface and transmembrane proteins form a heterodimer. They are attached by non-covalent interactions or by a labile interchain disulfide bond. Interacts with MFSD2A. In terms of processing, specific enzymatic cleavages in vivo yield the mature SU and TM proteins. The CXXC motif is highly conserved across a broad range of retroviral envelope proteins. It is thought to participate in the formation of a labile disulfide bond possibly with the CX6CC motif present in the transmembrane protein. Isomerization of the intersubunit disulfide bond to an SU intrachain disulfide bond is thought to occur upon receptor recognition in order to allow membrane fusion. In terms of tissue distribution, expressed at higher level in placenta. Expressed at lower level in adrenal, bone marrow, brain, breast, colon, kidney, lung, ovary, peripheral blood lymphocytes, prostate, skin, spleen, testis, thymus, thyroid, trachea.

It is found in the virion. The protein resides in the cell membrane. Its function is as follows. This endogenous retroviral envelope protein has retained its original fusogenic properties and participates in trophoblast fusion and the formation of a syncytium during placenta morphogenesis. The interaction with MFSD2A is apparently important for this process. Endogenous envelope proteins may have kept, lost or modified their original function during evolution but this one can still make pseudotypes with MLV, HIV-1 or SIV-1 virions and confer infectivity. Retroviral envelope proteins mediate receptor recognition and membrane fusion during early infection. The surface protein mediates receptor recognition, while the transmembrane protein anchors the envelope heterodimer to the viral membrane through one transmembrane domain. The other hydrophobic domain, called fusion peptide, mediates fusion of the viral membrane with the target cell membrane. In Homo sapiens (Human), this protein is Syncytin-2 (ERVFRD-1).